Here is a 253-residue protein sequence, read N- to C-terminus: Vitamin B12 import ATP-binding protein BtuD (253 aa).

The ABC transporter domain maps to 4–236 (LQLNNVSVGT…DVLSQVFEVD (233 aa)). 32–39 (GPNGAGKS) lines the ATP pocket.

It belongs to the ABC transporter superfamily. Vitamin B12 importer (TC 3.A.1.13.1) family. The complex is composed of two ATP-binding proteins (BtuD), two transmembrane proteins (BtuC) and a solute-binding protein (BtuF).

The protein resides in the cell inner membrane. It carries out the reaction an R-cob(III)alamin(out) + ATP + H2O = an R-cob(III)alamin(in) + ADP + phosphate + H(+). In terms of biological role, part of the ABC transporter complex BtuCDF involved in vitamin B12 import. Responsible for energy coupling to the transport system. In Yersinia pestis, this protein is Vitamin B12 import ATP-binding protein BtuD.